A 338-amino-acid chain; its full sequence is Ketol-acid reductoisomerase (NADP(+)) (338 aa).

The KARI N-terminal Rossmann domain occupies 1-181 (MKVFYDKDCD…GGGRAGIIET (181 aa)). NADP(+) is bound by residues 24 to 27 (YGSQ), arginine 47, and serine 52. The active site involves histidine 107. Position 133 (glycine 133) interacts with NADP(+). A KARI C-terminal knotted domain is found at 182-327 (NFREETETDL…GKLRAMMPWI (146 aa)). Mg(2+) contacts are provided by aspartate 190, glutamate 194, glutamate 226, and glutamate 230. Serine 251 contributes to the substrate binding site.

This sequence belongs to the ketol-acid reductoisomerase family. Mg(2+) serves as cofactor.

The enzyme catalyses (2R)-2,3-dihydroxy-3-methylbutanoate + NADP(+) = (2S)-2-acetolactate + NADPH + H(+). It carries out the reaction (2R,3R)-2,3-dihydroxy-3-methylpentanoate + NADP(+) = (S)-2-ethyl-2-hydroxy-3-oxobutanoate + NADPH + H(+). It functions in the pathway amino-acid biosynthesis; L-isoleucine biosynthesis; L-isoleucine from 2-oxobutanoate: step 2/4. It participates in amino-acid biosynthesis; L-valine biosynthesis; L-valine from pyruvate: step 2/4. Functionally, involved in the biosynthesis of branched-chain amino acids (BCAA). Catalyzes an alkyl-migration followed by a ketol-acid reduction of (S)-2-acetolactate (S2AL) to yield (R)-2,3-dihydroxy-isovalerate. In the isomerase reaction, S2AL is rearranged via a Mg-dependent methyl migration to produce 3-hydroxy-3-methyl-2-ketobutyrate (HMKB). In the reductase reaction, this 2-ketoacid undergoes a metal-dependent reduction by NADPH to yield (R)-2,3-dihydroxy-isovalerate. This is Ketol-acid reductoisomerase (NADP(+)) from Bordetella pertussis (strain Tohama I / ATCC BAA-589 / NCTC 13251).